We begin with the raw amino-acid sequence, 564 residues long: Plant UBX domain-containing protein 8 (564 aa).

Ala-2 carries the N-acetylalanine modification. Residues 2-44 (ATPNQEAIDTFISITGASDAVALQKLEEHRGDLNQAVNAYFSE) enclose the UBA-like domain. UIM domains are found at residues 198–217 (IEEE…AEGS) and 230–249 (EDDD…AEEE). The tract at residues 210 to 229 (SKKEAEGSSNPLLEERPLHM) is disordered. Disordered stretches follow at residues 267-358 (AVTA…EEHD), 371-423 (IPET…DKEM), and 443-483 (FLEE…QADE). The span at 291-300 (FDDDSDDVDE) shows a compositional bias: acidic residues. Residues Ser-295, Ser-324, Ser-326, and Ser-328 each carry the phosphoserine modification. Residues 322–334 (DRSRSGSPEEEHA) show a composition bias toward basic and acidic residues. Residues 381–395 (FLPPQPRAQPRPPSP) show a composition bias toward pro residues. Residues 412-478 (VASLQADRDK…DAKEASLPKE (67 aa)) are a coiled coil. Basic and acidic residues predominate over residues 443 to 475 (FLEEEKKKEEEAQRKLEEEQELERQLDAKEASL). Positions 482-560 (DEENAITLLI…GLTSKQEALF (79 aa)) constitute a UBX domain.

Interacts with RABA5C/ARA-4.

The chain is Plant UBX domain-containing protein 8 from Arabidopsis thaliana (Mouse-ear cress).